Reading from the N-terminus, the 310-residue chain is Olfactory receptor 5AR1 (310 aa).

Over 1–28 (MDKENSSMVTEFIFMGITQDPQMEIIFF) the chain is Extracellular. Asn5 carries an N-linked (GlcNAc...) asparagine glycan. Residues 29–49 (VVFLIVYLVNVVGNIGMIILI) form a helical membrane-spanning segment. Topologically, residues 50 to 58 (TTDTQLHTP) are cytoplasmic. Residues 59–79 (MYFFLCNLSFVDLGYSSAIAP) form a helical membrane-spanning segment. Residues 80 to 100 (RMLADFLTNHKVISFSSCATQ) lie on the Extracellular side of the membrane. The cysteines at positions 97 and 189 are disulfide-linked. A helical transmembrane segment spans residues 101–120 (FAFFVGFVDAECYVLAAMAY). The Cytoplasmic segment spans residues 121–139 (GRFVAICRPLHYSTFMSKQ). A helical transmembrane segment spans residues 140–160 (VCLALMLGSYLAGLVSLVAHT). Residues 161–205 (TLTFSLSYCGSNIINHFFCEIPPLLALSCSDTYISEILLFSLCGF) are Extracellular-facing. Residues 206–226 (IEFSTILIIFISYTFILVAII) form a helical membrane-spanning segment. The Cytoplasmic portion of the chain corresponds to 227–239 (RMRSAEGRLKAFS). The chain crosses the membrane as a helical span at residues 240–260 (TCGSHLTGITLFYGTVMFMYL). Topologically, residues 261-271 (RPTSSYSLDQD) are extracellular. A helical transmembrane segment spans residues 272-292 (KWASVFYTVIIPMLNPLIYSL). Residues 293–310 (RNKDVKAAFKKLIGKKSQ) are Cytoplasmic-facing.

It belongs to the G-protein coupled receptor 1 family.

It is found in the cell membrane. Functionally, odorant receptor. This is Olfactory receptor 5AR1 from Homo sapiens (Human).